We begin with the raw amino-acid sequence, 307 residues long: D-alanine--D-alanine ligase (307 aa).

The region spanning 104–301 (RTAFLAAGLP…FVSLCRWMVE (198 aa)) is the ATP-grasp domain. Residue 130-183 (PLPRPFVIKPANEGSAVGVHILHEGDNRRTEIARSWSFGGQALVEEYIPGRELT) participates in ATP binding. Residues D251, E268, and N270 each contribute to the Mg(2+) site.

It belongs to the D-alanine--D-alanine ligase family. Requires Mg(2+) as cofactor. Mn(2+) serves as cofactor.

The protein resides in the cytoplasm. The catalysed reaction is 2 D-alanine + ATP = D-alanyl-D-alanine + ADP + phosphate + H(+). It functions in the pathway cell wall biogenesis; peptidoglycan biosynthesis. Functionally, cell wall formation. This is D-alanine--D-alanine ligase from Granulibacter bethesdensis (strain ATCC BAA-1260 / CGDNIH1).